Consider the following 524-residue polypeptide: Cytochrome P450 monooxygenase patH (524 aa).

The Cytoplasmic portion of the chain corresponds to 1–4 (MEPM). Residues 5–23 (LLLILVAAVVLLFVRWAFV) form a helical membrane-spanning segment. The Lumenal portion of the chain corresponds to 24–524 (YGHRTSNMPK…KEVFSQFTEG (501 aa)). N-linked (GlcNAc...) asparagine glycosylation is present at N191. Residue C442 participates in heme binding. An N-linked (GlcNAc...) asparagine glycan is attached at N499.

This sequence belongs to the cytochrome P450 family. The cofactor is heme.

The protein localises to the endoplasmic reticulum membrane. The catalysed reaction is 3-methylphenol + reduced [NADPH--hemoprotein reductase] + O2 = 3-hydroxybenzyl alcohol + oxidized [NADPH--hemoprotein reductase] + H2O + H(+). The protein operates within mycotoxin biosynthesis; patulin biosynthesis. In terms of biological role, cytochrome P450 monooxygenase; part of the gene cluster that mediates the biosynthesis of patulin, an acetate-derived tetraketide mycotoxin produced by several fungal species that shows antimicrobial properties against several bacteria. PatH catalyzes the conversion of m-cresol into m-hydroxybenzyl alcohol. The pathway begins with the synthesis of 6-methylsalicylic acid by the polyketide synthase (PKS) patK via condensation of acetate and malonate units. The 6-methylsalicylic acid decarboxylase patG then catalyzes the decarboxylation of 6-methylsalicylic acid to yield m-cresol (also known as 3-methylphenol). These first reactions occur in the cytosol. The intermediate m-cresol is then transported into the endoplasmic reticulum where the cytochrome P450 monooxygenase patH converts it to m-hydroxybenzyl alcohol, which is further converted to gentisyl alcohol by the cytochrome P450 monooxygenase patI. The oxidoreductases patJ and patO further convert gentisyl alcohol to isoepoxydon in the vacuole. PatN catalyzes then the transformation of isoepoxydon into phyllostine. The cluster protein patF is responsible for the conversion from phyllostine to neopatulin whereas the alcohol dehydrogenase patD converts neopatulin to E-ascladiol. The steps between isoepoxydon and E-ascladiol occur in the cytosol, and E-ascladiol is probably secreted to the extracellular space by one of the cluster-specific transporters patC or patM. Finally, the secreted patulin synthase patE catalyzes the conversion of E-ascladiol to patulin. The polypeptide is Cytochrome P450 monooxygenase patH (Aspergillus clavatus (strain ATCC 1007 / CBS 513.65 / DSM 816 / NCTC 3887 / NRRL 1 / QM 1276 / 107)).